Reading from the N-terminus, the 1453-residue chain is Collagen alpha-1(I) chain (1453 aa).

The N-terminal stretch at 1–22 is a signal peptide; sequence MFSFVDLRLLLLLGATALLTHG. The propeptide at 23-151 is N-terminal propeptide; the sequence is QEDIPEVSCI…PPGLGGNFAS (129 aa). Residues 29–87 form the VWFC domain; it reads VSCIHNGLRVPNGETWKPDVCLICICHNGTAVCDGVLCKEDLDCPNPQKREGECCPFCP. N-linked (GlcNAc...) asparagine glycosylation occurs at asparagine 56. The tract at residues 97 to 1206 is disordered; it reads VIGVEGPKGD…KSQDGGRYYR (1110 aa). 2 stretches are compositionally biased toward pro residues: residues 109 to 118 and 128 to 143; these read PQGPRGPVGP and PGLP…PGPP. Glutamine 152 is modified (pyrrolidone carboxylic acid). The nonhelical region (N-terminal) stretch occupies residues 152 to 167; it reads QMSYGYDEKSAGVSVP. At lysine 160 the chain carries Allysine. Serine 161 is subject to Phosphoserine. A triple-helical region region spans residues 168 to 1181; sequence GPMGPSGPRG…PGPPGPPGPP (1014 aa). Residues proline 179, proline 182, proline 185, proline 194, proline 197, proline 200, proline 215, proline 230, proline 236, proline 245, and proline 251 each carry the 4-hydroxyproline modification. Residues 187-206 are compositionally biased toward low complexity; sequence PQGFQGPPGEPGEPGASGPM. The segment covering 218 to 232 has biased composition (basic and acidic residues); the sequence is NGDDGEAGKPGRPGE. At lysine 254 the chain carries 5-hydroxylysine; alternate. A glycan (O-linked (Gal...) hydroxylysine; alternate) is linked at lysine 254. Serine 260 carries the post-translational modification Phosphoserine. 4-hydroxyproline is present on residues proline 278, proline 281, proline 287, proline 296, and proline 302. Residues 307–320 show a composition bias toward low complexity; it reads SAGARGNDGAVGAA. A compositionally biased stretch (pro residues) spans 322 to 334; sequence PPGPTGPTGPPGF. Residues proline 323, proline 332, proline 335, proline 362, proline 365, proline 377, proline 383, proline 392, proline 398, proline 401, and proline 416 each carry the 4-hydroxyproline modification. The segment covering 335–361 has biased composition (low complexity); that stretch reads PGAAGAKGEAGPQGARGSEGPQGVRGE. Residues 368-418 show a composition bias toward low complexity; it reads AGAAGPAGNPGADGQPGAKGANGAPGIAGAPGFPGARGPSGPQGPSGAPGP. Lysine 419 carries the post-translational modification 5-hydroxylysine. Proline 425, proline 428, proline 440, proline 449, proline 464, proline 470, proline 479, and proline 485 each carry 4-hydroxyproline. Over residues 474-483 the composition is skewed to gly residues; the sequence is GERGGPGSRG. Lysine 494 carries the 5-hydroxylysine modification. 4-hydroxyproline is present on residues proline 503, proline 512, proline 518, proline 524, proline 533, proline 536, proline 545, proline 554, proline 560, proline 572, proline 581, proline 590, proline 593, proline 611, proline 629, proline 635, proline 641, proline 647, proline 653, proline 659, proline 671, proline 680, proline 692, proline 704, proline 707, proline 713, proline 719, and proline 728. Over residues 527-566 the composition is skewed to low complexity; sequence KGLTGSPGSPGPDGKTGPPGPAGQDGRPGPAGPPGARGQA. The span at 623 to 650 shows a compositional bias: low complexity; it reads QGPAGSPGFQGLPGPAGPPGEAGKPGEQ. Low complexity-rich tracts occupy residues 685 to 695 and 703 to 716; these read PRGNNGAPGND and APGA…PGLQ. The Cell attachment site signature appears at 734 to 736; that stretch reads RGD. The residue at position 740 (lysine 740) is a 5-hydroxylysine. 4-hydroxyproline occurs at positions 746, 761, and 767. Residues 773–787 are compositionally biased toward low complexity; it reads TGPSGPAGPTGARGA. Position 776 is a phosphoserine (serine 776). A 4-hydroxyproline mark is found at proline 788, proline 794, proline 797, proline 806, proline 812, proline 830, proline 839, and proline 848. Over residues 800 to 815 the composition is skewed to low complexity; it reads AGFAGPPGADGQPGAK. Positions 829–841 are enriched in pro residues; it reads PPGPAGPAGPPGP. The segment covering 842–872 has biased composition (low complexity); that stretch reads IGNVGAPGPKGSRGAAGPPGATGFPGAAGRV. Lysine 851 carries the 5-hydroxylysine modification. 4-hydroxyproline is present on residues proline 860 and proline 866. The residue at position 874 (proline 874) is a 3-hydroxyproline. Residues proline 875, proline 884, proline 887, proline 908, proline 917, proline 926, proline 935, proline 953, proline 962, proline 965, proline 971, proline 986, proline 992, proline 998, proline 1007, and proline 1013 each carry the 4-hydroxyproline modification. The span at 901–910 shows a compositional bias: low complexity; the sequence is ETGPAGRPGE. Residues 920–935 are compositionally biased toward low complexity; sequence AGEKGSPGADGPAGSP. The segment covering 985–995 has biased composition (pro residues); it reads PPGPMGPPGLA. The span at 997–1012 shows a compositional bias: low complexity; that stretch reads PPGESGREGSPGAEGS. Position 1022 is a 5-hydroxylysine (lysine 1022). The segment covering 1031 to 1046 has biased composition (pro residues); it reads AGPPGAPGAPGAPGPV. 4-hydroxyproline occurs at positions 1034, 1037, and 1040. Residues 1067 to 1081 show a composition bias toward low complexity; it reads IGPAGARGPAGPQGP. The Cell attachment site signature appears at 1082–1084; that stretch reads RGD. Over residues 1082-1096 the composition is skewed to basic and acidic residues; the sequence is RGDKGETGEQGDRGI. Residue lysine 1085 is modified to 5-hydroxylysine. At lysine 1097 the chain carries 5-hydroxylysine; alternate. O-linked (Gal...) hydroxylysine; alternate glycosylation occurs at lysine 1097. The segment covering 1102–1148 has biased composition (low complexity); that stretch reads FSGLQGPPGSPGSPGEQGPSGASGPAGPRGPPGSAGSPGKDGLNGLP. 4-hydroxyproline occurs at positions 1109, 1112, 1115, 1133, and 1148. 3-hydroxyproline is present on proline 1153. Proline 1154 carries the post-translational modification 4-hydroxyproline. The segment covering 1166–1181 has biased composition (pro residues); sequence AGPPGPPGPPGPPGPP. Proline 1168 is subject to 3-hydroxyproline. At proline 1169 the chain carries 4-hydroxyproline. Proline 1171 is subject to 3-hydroxyproline. At proline 1172 the chain carries 4-hydroxyproline. The residue at position 1174 (proline 1174) is a 3-hydroxyproline. 3 positions are modified to 4-hydroxyproline: proline 1175, proline 1178, and proline 1181. Positions 1176-1186 are major antigenic determinant (of neutral salt-extracted rat skin collagen); it reads GPPGPPSGGYD. The tract at residues 1182-1207 is nonhelical region (C-terminal); that stretch reads SGGYDFSFLPQPPQEKSQDGGRYYRA. At lysine 1197 the chain carries Allysine. Residues 1197–1206 are compositionally biased toward basic and acidic residues; sequence KSQDGGRYYR. Positions 1208–1453 are cleaved as a propeptide — C-terminal propeptide; it reads DDANVVRDRD…GMDIGPACFV (246 aa). The Fibrillar collagen NC1 domain maps to 1218-1453; it reads LEVDTTLKSL…GMDIGPACFV (236 aa). Intrachain disulfides connect cysteine 1248/cysteine 1280, cysteine 1288/cysteine 1451, and cysteine 1359/cysteine 1404. Positions 1266, 1268, 1269, 1271, and 1274 each coordinate Ca(2+). Residue asparagine 1354 is glycosylated (N-linked (GlcNAc...) asparagine).

Belongs to the fibrillar collagen family. As to quaternary structure, trimers of one alpha 2(I) and two alpha 1(I) chains. Interacts with MRC2. Interacts with TRAM2. Interacts with MFAP4 in a Ca (2+)-dependent manner. Contains mostly 4-hydroxyproline. Proline residues at the third position of the tripeptide repeating unit (G-X-Y) are hydroxylated in some or all of the chains. In terms of processing, contains 3-hydroxyproline at a few sites. This modification occurs on the first proline residue in the sequence motif Gly-Pro-Hyp, where Hyp is 4-hydroxyproline. Post-translationally, lysine residues at the third position of the tripeptide repeating unit (G-X-Y) are 5-hydroxylated in some or all of the chains. O-glycosylated on hydroxylated lysine residues. The O-linked glycan consists of a Glc-Gal disaccharide. In terms of tissue distribution, forms the fibrils of tendon, ligaments and bones. In bones the fibrils are mineralized with calcium hydroxyapatite.

It is found in the secreted. The protein localises to the extracellular space. It localises to the extracellular matrix. Type I collagen is a member of group I collagen (fibrillar forming collagen). This is Collagen alpha-1(I) chain (Col1a1) from Rattus norvegicus (Rat).